A 204-amino-acid chain; its full sequence is Large ribosomal subunit protein eL15 (204 aa).

It belongs to the eukaryotic ribosomal protein eL15 family. As to quaternary structure, component of the large ribosomal subunit.

The protein localises to the cytoplasm. Component of the large ribosomal subunit. The ribosome is a large ribonucleoprotein complex responsible for the synthesis of proteins in the cell. This chain is Large ribosomal subunit protein eL15 (rpl15), found in Tachysurus fulvidraco (Yellow catfish).